A 364-amino-acid chain; its full sequence is MWVRTTLTIERWTKEKTEPKARSWDEALSDVNRLPSWERGHLLAGVASSTDVSTFSEGGDCKEPDKCCWRHKQCTGHIIYPFASDCVRHSLHLHSVNHCNCNSRLKDSSEDSSSSRGAGPTCSHVIESPCFELTPEEEHVERFRYGWCKSYRPVSVAVIHHPLYHECGADDLNEEEEEEEEESKPPIPTQVGPATASPDLGTSMATGTPDSTAPITIWRSESPTGKGQGSKVIKKVKKKKEKEKDKEEMDEKAKLKKKAKKGQLTKKKSPVKLEPSPPDVSRSLSARQLARMSESSPESREELESEDSYNGRGQGELSSEDIVESSSPRKRENTVQAKKTGAKPSQARKVNKRKSPPGSNPNLS.

Residues 172 to 182 (LNEEEEEEEEE) show a composition bias toward acidic residues. The tract at residues 172-364 (LNEEEEEEEE…SPPGSNPNLS (193 aa)) is disordered. The span at 203–223 (SMATGTPDSTAPITIWRSESP) shows a compositional bias: polar residues. Basic residues predominate over residues 232–241 (VIKKVKKKKE). Residues 242–253 (KEKDKEEMDEKA) are compositionally biased toward basic and acidic residues. Residues 254 to 270 (KLKKKAKKGQLTKKKSP) show a composition bias toward basic residues. A phosphoserine mark is found at Ser276, Ser308, Ser318, Ser319, Ser355, and Ser364.

It belongs to the PROCA1 family. In terms of tissue distribution, high expressed in testis.

The polypeptide is Protein PROCA1 (PROCA1) (Homo sapiens (Human)).